The following is a 237-amino-acid chain: Pyridoxine 5'-phosphate synthase (237 aa).

3-amino-2-oxopropyl phosphate-binding residues include N7 and R18. H43 (proton acceptor) is an active-site residue. 1-deoxy-D-xylulose 5-phosphate contacts are provided by R45 and H50. The Proton acceptor role is filled by E70. T100 is a binding site for 1-deoxy-D-xylulose 5-phosphate. H190 serves as the catalytic Proton donor. 3-amino-2-oxopropyl phosphate contacts are provided by residues D191 and 213-214 (GH).

This sequence belongs to the PNP synthase family. Homooctamer; tetramer of dimers.

It localises to the cytoplasm. The catalysed reaction is 3-amino-2-oxopropyl phosphate + 1-deoxy-D-xylulose 5-phosphate = pyridoxine 5'-phosphate + phosphate + 2 H2O + H(+). It functions in the pathway cofactor biosynthesis; pyridoxine 5'-phosphate biosynthesis; pyridoxine 5'-phosphate from D-erythrose 4-phosphate: step 5/5. Catalyzes the complicated ring closure reaction between the two acyclic compounds 1-deoxy-D-xylulose-5-phosphate (DXP) and 3-amino-2-oxopropyl phosphate (1-amino-acetone-3-phosphate or AAP) to form pyridoxine 5'-phosphate (PNP) and inorganic phosphate. The sequence is that of Pyridoxine 5'-phosphate synthase from Bacteroides fragilis (strain ATCC 25285 / DSM 2151 / CCUG 4856 / JCM 11019 / LMG 10263 / NCTC 9343 / Onslow / VPI 2553 / EN-2).